The primary structure comprises 568 residues: Calcium-dependent protein kinase 5 (568 aa).

Residues 125 to 379 (EIDRYKLGKG…VEQVLKHRWF (255 aa)) enclose the Protein kinase domain. ATP-binding positions include 131–139 (LGKGSYGNV) and K154. D245 serves as the catalytic Proton acceptor. Residues 400 to 408 (KFKEFHKLC) carry the J domain autoinhibitory motif motif. The tract at residues 400–435 (KFKEFHKLCKIKKLAVTCIAYQLNEKDIGKLKKTFE) is j domain. The J domain EF-hand interaction motif motif lies at 409-418 (KIKKLAVTCI). EF-hand domains follow at residues 425–460 (KDIG…NDNE), 462–495 (DREL…HSIF), 496–531 (QQDV…SAVQ), and 534–568 (FSKE…GVKE). The Ca(2+) site is built by D438, N440, D442, E449, D473, D475, N477, E484, D509, D511, D513, E520, D547, N549, D551, and E558.

It belongs to the protein kinase superfamily. Ser/Thr protein kinase family. CDPK subfamily. It depends on Mg(2+) as a cofactor. Post-translationally, may be palmitoylated. Autophosphorylated in vitro.

It is found in the cytoplasm. The protein localises to the cytoplasmic vesicle. The protein resides in the secretory vesicle. Its subcellular location is the microneme membrane. It localises to the cell membrane. The catalysed reaction is L-seryl-[protein] + ATP = O-phospho-L-seryl-[protein] + ADP + H(+). It carries out the reaction L-threonyl-[protein] + ATP = O-phospho-L-threonyl-[protein] + ADP + H(+). Its activity is regulated as follows. Activated by calcium. Upon calcium binding to the EF-hand domains, the C-terminus of the junction domain (J domain) undergoes a conformational change which results in the dissociation of the pseudo-substrate inhibitory motif from the catalytic domain. This, in turn, may facilitate the autophosphorylation of the activation loop at Thr-285, which leads to the kinase activation. Calcium-dependent protein kinase which acts as a sensor and effector of intracellular Ca(2+) levels probably in part downstream of cGMP-activated PKG kinase. Plays a central role in host erythrocytes and hepatocytes infection cycles. During the liver stage, involved in sporozoite motility and thus in sporozoite invasion of host hepatocytes, probably together with CDPK1 and CDPK4. Involved in merosome egress from host hepatocytes, probably together with CDPK4. Required for the release of hepatic merozoites from merosomes in the host blood stream. During the asexual blood stage, required for merozoite egress from host erythrocytes by triggering microneme secretion. Phosphorylates transporter NPT1 at late schizont stage. The sequence is that of Calcium-dependent protein kinase 5 from Plasmodium falciparum (isolate 3D7).